The chain runs to 150 residues: Troponin C, isoform 1 (150 aa).

Met-1 bears the N-acetylmethionine mark. EF-hand domains are found at residues 7–42 (DQVQ…MGVK), 43–78 (ISDR…FLSE), 83–118 (ALKK…LDNK), and 119–150 (LTED…MMNG). 5 residues coordinate Ca(2+): Asp-56, Asp-58, Ser-60, Glu-62, and Glu-67. Ca(2+)-binding residues include Asp-132, Asp-134, Ser-136, Thr-138, and Glu-143.

Belongs to the troponin C family.

In terms of biological role, troponin is the central regulatory protein of striated muscle contraction. Tn consists of three components: Tn-I which is the inhibitor of actomyosin ATPase, Tn-T which contains the binding site for tropomyosin and Tn-C. The binding of calcium to Tn-C abolishes the inhibitory action of Tn on actin filaments. The polypeptide is Troponin C, isoform 1 (Homarus americanus (American lobster)).